Here is a 325-residue protein sequence, read N- to C-terminus: G/U mismatch-specific uracil DNA glycosylase (325 aa).

The segment covering 1-11 (MNDIETRDTGT) has biased composition (basic and acidic residues). The disordered stretch occupies residues 1-50 (MNDIETRDTGTKNDNSSEFNLSVKSHKRKRSFDDENLELEESREETSGGI). Residues 12-23 (KNDNSSEFNLSV) are compositionally biased toward polar residues. The span at 34-43 (DENLELEESR) shows a compositional bias: acidic residues.

It belongs to the uracil-DNA glycosylase (UDG) superfamily. TDG/mug family.

Its subcellular location is the nucleus. It carries out the reaction Specifically hydrolyzes mismatched double-stranded DNA and polynucleotides, releasing free uracil.. In terms of biological role, removes uracil from G/U mispairs in ssDNA. Also corrects G/G mispairs. Does not catalyze the removal of thymine from G/T mispairs. This is G/U mismatch-specific uracil DNA glycosylase (thp1) from Schizosaccharomyces pombe (strain 972 / ATCC 24843) (Fission yeast).